The chain runs to 138 residues: Phosphoribosyl-AMP cyclohydrolase (138 aa).

Mg(2+) is bound at residue Asp-85. Cys-86 contributes to the Zn(2+) binding site. Mg(2+)-binding residues include Asp-87 and Asp-89. Residues Cys-102 and Cys-109 each coordinate Zn(2+).

Belongs to the PRA-CH family. In terms of assembly, homodimer. Mg(2+) serves as cofactor. The cofactor is Zn(2+).

Its subcellular location is the cytoplasm. It catalyses the reaction 1-(5-phospho-beta-D-ribosyl)-5'-AMP + H2O = 1-(5-phospho-beta-D-ribosyl)-5-[(5-phospho-beta-D-ribosylamino)methylideneamino]imidazole-4-carboxamide. It participates in amino-acid biosynthesis; L-histidine biosynthesis; L-histidine from 5-phospho-alpha-D-ribose 1-diphosphate: step 3/9. Functionally, catalyzes the hydrolysis of the adenine ring of phosphoribosyl-AMP. This Methanothermobacter thermautotrophicus (strain ATCC 29096 / DSM 1053 / JCM 10044 / NBRC 100330 / Delta H) (Methanobacterium thermoautotrophicum) protein is Phosphoribosyl-AMP cyclohydrolase.